We begin with the raw amino-acid sequence, 159 residues long: Prs ADP-ribosylating antitoxin (159 aa).

The segment at 99 to 159 (EDMVEESGET…LAQIQSGAFA (61 aa)) is sufficient to neutralize toxin.

Belongs to the MbcA/ParS/Xre antitoxin family. Forms heterotetrameric ParS(2)-ParT(2) complexes. The 2 antitoxin fragments do not make contact in the crystal structure.

Functionally, antitoxin component of a type II toxin-antitoxin (TA) system. Neutralizes the bacteriostatic effect of cognate toxin ParT by inserting into its active site. The protein is Prs ADP-ribosylating antitoxin of Sphingobium sp. (strain YBL2).